Here is a 305-residue protein sequence, read N- to C-terminus: Oxygen-dependent coproporphyrinogen-III oxidase (305 aa).

Ser-98 lines the substrate pocket. 2 residues coordinate a divalent metal cation: His-102 and His-112. Residue His-112 is the Proton donor of the active site. Substrate is bound at residue 114–116 (NVR). Residues His-151 and His-181 each coordinate a divalent metal cation. An important for dimerization region spans residues 246-281 (YVEFNLVYDRGTLFGLQSGGRTESILMSMPPLARWE). 264–266 (GGR) is a binding site for substrate.

The protein belongs to the aerobic coproporphyrinogen-III oxidase family. As to quaternary structure, homodimer. The cofactor is a divalent metal cation.

It localises to the cytoplasm. It catalyses the reaction coproporphyrinogen III + O2 + 2 H(+) = protoporphyrinogen IX + 2 CO2 + 2 H2O. It participates in porphyrin-containing compound metabolism; protoporphyrin-IX biosynthesis; protoporphyrinogen-IX from coproporphyrinogen-III (O2 route): step 1/1. Functionally, involved in the heme biosynthesis. Catalyzes the aerobic oxidative decarboxylation of propionate groups of rings A and B of coproporphyrinogen-III to yield the vinyl groups in protoporphyrinogen-IX. This Vibrio atlanticus (strain LGP32) (Vibrio splendidus (strain Mel32)) protein is Oxygen-dependent coproporphyrinogen-III oxidase.